A 902-amino-acid chain; its full sequence is Probable polyribonucleotide nucleotidyltransferase 1, chloroplastic (902 aa).

The transit peptide at 1–66 (MLATPGALHH…RRRAAGARVR (66 aa)) directs the protein to the chloroplast. The span at 44–53 (VAASASTSRR) shows a compositional bias: low complexity. The tract at residues 44–93 (VAASASTSRRGGARRRAAGARVRASVGEEAPPVVTEEASTSGGPTKFSTK) is disordered. Polar residues predominate over residues 80–91 (EASTSGGPTKFS). Residues 693 to 753 (PLIHVMKVKP…SSLEKSKAII (61 aa)) enclose the KH domain. Residues 763-832 (GEIYRNCEIK…DKGQLRLSSR (70 aa)) enclose the S1 motif domain. The tract at residues 833–902 (ALLPDANQES…ASQGSEMGTE (70 aa)) is disordered. Residues 839 to 850 (NQESSSKQQAGG) show a composition bias toward polar residues. Positions 852–862 (TREKAPQKDNL) are enriched in basic and acidic residues. The span at 877–888 (EASTAENNATAS) shows a compositional bias: low complexity.

This sequence belongs to the polyribonucleotide nucleotidyltransferase family.

The protein resides in the plastid. It localises to the chloroplast. It catalyses the reaction RNA(n+1) + phosphate = RNA(n) + a ribonucleoside 5'-diphosphate. In terms of biological role, involved in the metabolism of all major classes of plastid RNAs. Required for efficient 3'-end processing of mRNAs and 3'-end maturation of rRNA transcripts, but is not sufficient to mediate their degradation. Mediates tRNA degradation. May function as a poly(A) mRNA 3'-5' degrading phosphorylase. In Oryza sativa subsp. japonica (Rice), this protein is Probable polyribonucleotide nucleotidyltransferase 1, chloroplastic (PNP1).